A 465-amino-acid polypeptide reads, in one-letter code: Solute carrier family 7 member 12 (465 aa).

At 1 to 6 (MQLLRA) the chain is on the cytoplasmic side. The chain crosses the membrane as a helical span at residues 7–27 (LGVFHVSMILFSATLGTGIFV). The Extracellular portion of the chain corresponds to 28-39 (TPKAVLKYSSLN). Residues 40 to 60 (IPVSLSIWAGCGLLSIMSALC) form a helical membrane-spanning segment. Residues 61–81 (NAEIATTYPLSGASYYFLKRT) lie on the Cytoplasmic side of the membrane. Residues 82 to 102 (LGSSVAFLSLWIKLFAHFLGI) form a helical membrane-spanning segment. The Extracellular segment spans residues 103–132 (GAQCLLIATSVIQCFYSGCPAPELPTKCLA). The chain crosses the membrane as a helical span at residues 133–153 (LAILWSFGIVSARGIKTVAWF). Asn154 is a topological domain (cytoplasmic). Residues 155 to 175 (TVSSFIKLSVLCLISLTVLLV) form a helical membrane-spanning segment. At 176–202 (NGKKENVSRFENALDAELPNASQIADA) the chain is on the extracellular side. Residues 203-223 (ILQVSYSYLGSSVLIVIAGEI) traverse the membrane as a helical segment. Topologically, residues 224–234 (KRPTETIPKTL) are cytoplasmic. Residues 235 to 255 (IYGISIVTVLYLLTNISYLAV) traverse the membrane as a helical segment. Over 256–280 (LTSQEIIFSDSVGVTWMNRVFPSIQ) the chain is Extracellular. Residues 281–301 (WISSFLISAFLLGSVSCGIVS) form a helical membrane-spanning segment. Topologically, residues 302 to 327 (ASRVFYSASQEGEFPSIYSMLNDHHS) are cytoplasmic. The helical transmembrane segment at 328–351 (PAVADIQIVILSSVAIISSSIIYL) threads the bilayer. Residues 352 to 356 (VKYVS) are Extracellular-facing. The chain crosses the membrane as a helical span at residues 357–375 (LGSFCINLLQMIGLLKIRY). The Cytoplasmic portion of the chain corresponds to 376-386 (QNPDIPRPYKV). The chain crosses the membrane as a helical span at residues 387–407 (WLPFIFGSIALSLFLIFTPVI). The Extracellular portion of the chain corresponds to 408-409 (QS). Residues 410–430 (PSIEHVYQVVFLFCGFLCYWL) form a helical membrane-spanning segment. Topologically, residues 431 to 465 (QANLNGHATCFDTITCYCQLLFNISPSEDPEEQKN) are cytoplasmic.

Belongs to the amino acid-polyamine-organocation (APC) superfamily. Probably forms multimers, perhaps with an unknown protein(s). In terms of tissue distribution, expressed in kidney and red blood cells (at protein level). Expressed in kidney along the collecting ducts in the cortex, outer and inner medulla. May be expressed in placenta, lungs, spleen and skeletal muscles.

The protein localises to the apical cell membrane. Its subcellular location is the basal cell membrane. It is found in the cytoplasm. In terms of biological role, probably mediates sodium- and chloride-independent uptake of neutral amino acids. This chain is Solute carrier family 7 member 12, found in Mus musculus (Mouse).